The primary structure comprises 1706 residues: Serine/threonine-protein kinase vps15 (1706 aa).

The Protein kinase domain occupies tyrosine 24–phenylalanine 293. ATP-binding positions include leucine 30–threonine 38 and lysine 52. An HEAT 1 repeat occupies asparagine 56–leucine 94. Aspartate 146 (proton acceptor) is an active-site residue. 7 HEAT repeats span residues leucine 426–aspartate 465, glutamate 466–serine 504, phenylalanine 511–lysine 549, histidine 587–lysine 625, alanine 626–proline 664, arginine 665–phenylalanine 703, and lysine 705–aspartate 743. Residue serine 957 is modified to Phosphoserine. Tyrosine 958 is subject to Phosphotyrosine. The segment at threonine 982 to serine 1099 is disordered. Composition is skewed to basic and acidic residues over residues lysine 984–asparagine 1002 and aspartate 1014–glutamate 1023. Residues aspartate 1029 to tyrosine 1055 are compositionally biased toward polar residues. Positions asparagine 1056 to proline 1069 are enriched in low complexity. The segment covering lysine 1079–glycine 1090 has biased composition (basic and acidic residues). WD repeat units lie at residues leucine 1213–serine 1252 and leucine 1368–serine 1407. Residues asparagine 1431–valine 1442 show a composition bias toward polar residues. A disordered region spans residues asparagine 1431–serine 1461. A WD 3 repeat occupies cysteine 1577–serine 1622.

This sequence belongs to the protein kinase superfamily. Ser/Thr protein kinase family. As to quaternary structure, component of the autophagy-specific vps34 PI3-kinase complex I composed of vps15, atg6, pik3/vps34, atg14 and atg38. Also a component of the vps34 PI3-kinase complex II composed of atg6, pik3, vps15 and vps38.

It catalyses the reaction L-seryl-[protein] + ATP = O-phospho-L-seryl-[protein] + ADP + H(+). It carries out the reaction L-threonyl-[protein] + ATP = O-phospho-L-threonyl-[protein] + ADP + H(+). Functionally, functions as a part of the autophagy-specific VPS34 PI3-kinase complex I that plays a role in autophagosome assembly. This complex is essential to recruit the atg8-phosphatidylinositol conjugate and the atg12-atg5 conjugate to the pre-autophagosomal structure. Also functions as part of the VPS34 PI3-kinase complex II. This chain is Serine/threonine-protein kinase vps15, found in Schizosaccharomyces pombe (strain 972 / ATCC 24843) (Fission yeast).